A 161-amino-acid polypeptide reads, in one-letter code: HMG1/2-like protein (161 aa).

Disordered regions lie at residues 1–46, 60–91, and 113–161; these read MKGA…KRAP, FKQK…EKAP, and GESA…DDDE. Composition is skewed to basic and acidic residues over residues 10–27 and 77–89; these read AKAD…EKPA and AGER…ESEK. Positions 42–111 form a DNA-binding region, HMG box; it reads PKRAPSAFFV…EYNKAIAAYN (70 aa). A compositionally biased stretch (low complexity) spans 114-123; that stretch reads ESAAAAAPKK. The span at 145-161 shows a compositional bias: acidic residues; that stretch reads NDDDDDEGSDEDEDDDE.

Belongs to the HMGB family.

The protein resides in the nucleus. In Triticum aestivum (Wheat), this protein is HMG1/2-like protein.